A 377-amino-acid chain; its full sequence is Glutamate 5-kinase (377 aa).

Position 15 (lysine 15) interacts with ATP. 3 residues coordinate substrate: serine 56, aspartate 143, and asparagine 155. Residue 175 to 176 coordinates ATP; it reads SD. A PUA domain is found at 281–358; it reads KGTLTIDAGA…PDVLIILGIS (78 aa).

The protein belongs to the glutamate 5-kinase family.

It localises to the cytoplasm. It catalyses the reaction L-glutamate + ATP = L-glutamyl 5-phosphate + ADP. It functions in the pathway amino-acid biosynthesis; L-proline biosynthesis; L-glutamate 5-semialdehyde from L-glutamate: step 1/2. In terms of biological role, catalyzes the transfer of a phosphate group to glutamate to form L-glutamate 5-phosphate. The polypeptide is Glutamate 5-kinase (Rhodopseudomonas palustris (strain BisA53)).